We begin with the raw amino-acid sequence, 90 residues long: Small ribosomal subunit protein uS17m (90 aa).

It belongs to the universal ribosomal protein uS17 family. Component of the mitochondrial small ribosomal subunit (mt-SSU). Mature yeast 74S mitochondrial ribosomes consist of a small (37S) and a large (54S) subunit. The 37S small subunit contains a 15S ribosomal RNA (15S mt-rRNA) and at least 32 different proteins. The 54S large subunit contains a 21S rRNA (21S mt-rRNA) and at least 45 different proteins.

Its subcellular location is the mitochondrion. Component of the mitochondrial ribosome (mitoribosome), a dedicated translation machinery responsible for the synthesis of mitochondrial genome-encoded proteins, including at least some of the essential transmembrane subunits of the mitochondrial respiratory chain. The mitoribosomes are attached to the mitochondrial inner membrane and translation products are cotranslationally integrated into the membrane. uS17m may have a meiosis-specific role as it accumulates during the middle stage of sporulation. The sequence is that of Small ribosomal subunit protein uS17m from Schizosaccharomyces pombe (strain 972 / ATCC 24843) (Fission yeast).